The sequence spans 314 residues: BTB/POZ domain-containing protein KCTD17 (314 aa).

One can recognise a BTB domain in the interval 24–94; sequence KWVRLNVGGT…LRHGKLVLDK (71 aa). The disordered stretch occupies residues 190-268; that stretch reads STPNGLSSES…PAGGSRPHPL (79 aa). The stretch at 196–239 forms a coiled coil; the sequence is SSESSRKTKSTEEQLEEQQQQEEEVEEVEVEQVQVEADAQEKAQ. A compositionally biased stretch (acidic residues) spans 208-225; it reads EQLEEQQQQEEEVEEVEV.

Homopentamer; forms a closed pentamer. Interacts with CUL3; interaction is direct and forms a 5:5 heterodecamer. Interacts with TCHP. Interacts with CUL3, as part of the BCR(KCTD17) E3 ubiquitin ligase complex, at least composed of CUL3, KCTD17 and RBX1. As to expression, highly expressed in brain. Highest expression is observed in the putamen and the thalamus.

The protein localises to the cytoplasm. In terms of biological role, substrate-adapter for CUL3-RING ubiquitin ligase complexes which mediates the ubiquitination and subsequent proteasomal degradation of TCHP, a protein involved in ciliogenesis down-regulation. Thereby, positively regulates ciliogenesis, playing a crucial role in the initial steps of axoneme extension. May also play a role in endoplasmic reticulum calcium ion homeostasis. The polypeptide is BTB/POZ domain-containing protein KCTD17 (Homo sapiens (Human)).